The primary structure comprises 434 residues: MEPSSEQESQESQKVDMEPVFRRESFAALRRNNVAARQLRVVTLNAWCLPQPWPIGSTDRVHRLNKIGQYMIDELYDIVGLQELWSYYDFVRLSEQVSSVYPYFHYFHSGFTGSGVCVFSRHPIVSTLTNRYSLNGFAHHIHRGDWFGGKVVGLTEIEIDGDLRVNFYTTHLHAEYDRENDLYLPHRTAQAFELAQFVRHTARGADVVIVTGDLNMEPCDLGFRLILSHAKLFDAWRMSHEVENEDSEGELLKFRGIAKGGTCDRPDNCYTKRALKNVDDSKRIDYMLFKSGRCNVKLEECEITLNQIPGEDLNYSDHVGLRARFTIDDRFRHEKSVNTWEPNRPLLIEAIGLVAGGERRARTDRIFFFILAVICLILILGSLFFEVFPMGFAVLRFALTVVGVFFVWQGLIGLTLERKALKAAKQAIQQILNN.

Glutamate 83 provides a ligand contact to Mg(2+). Histidine 318 functions as the Proton acceptor in the catalytic mechanism. 2 consecutive transmembrane segments (helical) span residues isoleucine 366–phenylalanine 388 and phenylalanine 392–leucine 414.

The protein belongs to the neutral sphingomyelinase family.

Its subcellular location is the membrane. The catalysed reaction is an N-(acyl)-sphingosylphosphocholine + H2O = an N-acyl-sphingoid base + phosphocholine + H(+). It catalyses the reaction a sphingomyelin + H2O = phosphocholine + an N-acylsphing-4-enine + H(+). It carries out the reaction an N-acyl-15-methylhexadecasphing-4-enine-1-phosphocholine + H2O = an N-acyl-15-methylhexadecasphing-4-enine + phosphocholine + H(+). The protein operates within lipid metabolism; sphingolipid metabolism. Functionally, catalyzes the hydrolysis of sphingomyelin producing a ceramide (N-acyl-sphingoid base) and a phosphocholine. C.elegans contain specific sphingoid bases, which are unique or different in structure compared to the sphingoid bases found in other animals. Two examples of these distinctive compounds are: 15-methylhexadecasphinganine and 15-methylhexadecasphing-4-enine. This Caenorhabditis elegans protein is Putative neutral sphingomyelinase.